A 126-amino-acid polypeptide reads, in one-letter code: Holo-[acyl-carrier-protein] synthase (126 aa).

The Mg(2+) site is built by D9 and E58.

The protein belongs to the P-Pant transferase superfamily. AcpS family. Requires Mg(2+) as cofactor.

It localises to the cytoplasm. It carries out the reaction apo-[ACP] + CoA = holo-[ACP] + adenosine 3',5'-bisphosphate + H(+). Functionally, transfers the 4'-phosphopantetheine moiety from coenzyme A to a Ser of acyl-carrier-protein. The chain is Holo-[acyl-carrier-protein] synthase from Klebsiella pneumoniae (strain 342).